The following is an 89-amino-acid chain: Small ribosomal subunit protein bS20 (89 aa).

The protein belongs to the bacterial ribosomal protein bS20 family.

In terms of biological role, binds directly to 16S ribosomal RNA. This Helicobacter pylori (strain ATCC 700392 / 26695) (Campylobacter pylori) protein is Small ribosomal subunit protein bS20.